The sequence spans 339 residues: Tetraacyldisaccharide 4'-kinase (339 aa).

Residue 62–69 (VAGGTGKT) coordinates ATP.

It belongs to the LpxK family.

The enzyme catalyses a lipid A disaccharide + ATP = a lipid IVA + ADP + H(+). It participates in glycolipid biosynthesis; lipid IV(A) biosynthesis; lipid IV(A) from (3R)-3-hydroxytetradecanoyl-[acyl-carrier-protein] and UDP-N-acetyl-alpha-D-glucosamine: step 6/6. Its function is as follows. Transfers the gamma-phosphate of ATP to the 4'-position of a tetraacyldisaccharide 1-phosphate intermediate (termed DS-1-P) to form tetraacyldisaccharide 1,4'-bis-phosphate (lipid IVA). This chain is Tetraacyldisaccharide 4'-kinase, found in Xylella fastidiosa (strain 9a5c).